The primary structure comprises 219 residues: Sugar transporter SWEET1 (219 aa).

A run of 7 helical transmembrane segments spans residues 3–23 (FLQL…TTGL), 38–58 (VQFL…YYGL), 63–83 (GTVI…IATY), 98–118 (LLMV…ISPG), 125–145 (LGLT…ADLL), 156–176 (LSFS…LYGL), and 189–209 (PGIF…AVIP). The region spanning 5 to 90 (QLLSCACIIF…ATYCHYTKEK (86 aa)) is the MtN3/slv 1 domain. A MtN3/slv 2 domain is found at 124–204 (QLGLTCSVFT…LIRFFLFWWF (81 aa)).

This sequence belongs to the SWEET sugar transporter family.

It is found in the golgi apparatus membrane. The protein resides in the cell membrane. In terms of biological role, mediates sugar transport across membranes. This is Sugar transporter SWEET1 (slc50a1) from Danio rerio (Zebrafish).